The sequence spans 263 residues: Gap junction beta-6 protein (263 aa).

Topologically, residues 1 to 19 (MDWGALQTILGGVNKHSTS) are cytoplasmic. The helical transmembrane segment at 20 to 40 (IGKIWLTVLFIFRIMILVVAA) threads the bilayer. At 41-75 (ERVWGDEQDDFICNTLQPGCKNVCYDHFFPISHIR) the chain is on the extracellular side. The helical transmembrane segment at 76 to 96 (LWALQLIFVSTPALLVAMHVA) threads the bilayer. The Cytoplasmic segment spans residues 97 to 137 (YRRHEKKRQFRKGDQKCEYKDIEEIRTQRFRIEGTLWWTYT). Residues 138-158 (CSIFFRLVFEAVFMYAFYFMY) form a helical membrane-spanning segment. Residues 159–189 (DGFRMPRLMKCSAWPCPNTVDCFVSRPTEKT) are Extracellular-facing. A helical membrane pass occupies residues 190–210 (VFTIFMIAVSSICILLNVAEL). The Cytoplasmic segment spans residues 211–263 (CYLLTKFFLRRSRKAGNQKHHPNHENKEETKQNEMNELISDSCQNTVIGFTSS).

Belongs to the connexin family. Beta-type (group I) subfamily. A connexon is composed of a hexamer of connexins. As to expression, exclusively expressed in the cochlea of the inner ear, where it is found in cells of the tegmentum vasculosum, cuboidal cells, supporting cells and clear cells.

The protein localises to the cell membrane. It is found in the cell junction. The protein resides in the gap junction. One gap junction consists of a cluster of closely packed pairs of transmembrane channels, the connexons, through which materials of low MW diffuse from one cell to a neighboring cell. This is Gap junction beta-6 protein (GJB6) from Gallus gallus (Chicken).